Consider the following 21-residue polypeptide: Dart gland peptide (21 aa).

Positions Ser1 to Gln21 are disordered. A glycan (N-linked (GlcNAc...) asparagine) is linked at Asn3.

Its subcellular location is the secreted. The polypeptide is Dart gland peptide (Cornu aspersum (Brown garden snail)).